We begin with the raw amino-acid sequence, 327 residues long: Succinylglutamate desuccinylase (327 aa).

Residues His-53, Glu-56, and His-146 each coordinate Zn(2+). Glu-209 is an active-site residue.

It belongs to the AspA/AstE family. Succinylglutamate desuccinylase subfamily. Zn(2+) serves as cofactor.

It catalyses the reaction N-succinyl-L-glutamate + H2O = L-glutamate + succinate. It participates in amino-acid degradation; L-arginine degradation via AST pathway; L-glutamate and succinate from L-arginine: step 5/5. Functionally, transforms N(2)-succinylglutamate into succinate and glutamate. This is Succinylglutamate desuccinylase from Serratia proteamaculans (strain 568).